We begin with the raw amino-acid sequence, 335 residues long: Olfactory receptor 9K2 (335 aa).

Over 1–50 the chain is Extracellular; it reads MLGSKPRVHLYILPCASQQVSTMGDRGTSNHSEMTDFILAGFRVRPELHI. N-linked (GlcNAc...) asparagine glycosylation is present at N30. Residues 51–71 traverse the membrane as a helical segment; the sequence is LLFLLFLFVYAMILLGNVGMM. Residues 72–79 lie on the Cytoplasmic side of the membrane; that stretch reads TIIMTDPR. Residues 80 to 100 traverse the membrane as a helical segment; it reads LNTPMYFFLGNLSFIDLFYSS. Over 101–124 the chain is Extracellular; the sequence is VIEPKAMINFWSENKSISFAGCVA. N114 carries N-linked (GlcNAc...) asparagine glycosylation. An intrachain disulfide couples C122 to C214. A helical transmembrane segment spans residues 125–145; that stretch reads QLFLFALLIVTEGFLLAAMAY. The Cytoplasmic segment spans residues 146-164; the sequence is DRFIAICNPLLYSVQMSTR. Residues 165–185 traverse the membrane as a helical segment; it reads LCTQLVAGSYFCGCISSVIQT. Topologically, residues 186 to 222 are extracellular; sequence SMTFTLSFCASRAVDHFYCDSRPLQRLSCSDLFIHRM. The helical transmembrane segment at 223–242 threads the bilayer; sequence ISFSLSCIIILPTIIVIIVS. Residues 243–262 lie on the Cytoplasmic side of the membrane; it reads YMYIVSTVLKIHSTEGHKKA. Residues 263-283 form a helical membrane-spanning segment; sequence FSTCSSHLGVVSVLYGAVFFM. Residues 284–296 lie on the Extracellular side of the membrane; the sequence is YLTPDRFPELSKV. At 316 to 335 the chain is on the cytoplasmic side; that stretch reads RNKDVQEALKKFLEKKNIIL.

It belongs to the G-protein coupled receptor 1 family.

It is found in the cell membrane. Functionally, odorant receptor. The polypeptide is Olfactory receptor 9K2 (OR9K2) (Homo sapiens (Human)).